A 464-amino-acid chain; its full sequence is Lysosomal dipeptide transporter MFSD1 (464 aa).

The short motif at 11-12 (LL) is the Dileucine internalization motif element. Ser-20 carries the phosphoserine modification. Helical transmembrane passes span 38-58 (LAHR…SYFC), 82-102 (LLYA…GFLI), 112-132 (TVIF…GGIF), 134-154 (AFWL…SLAV), 190-210 (LMGW…HMTL), 214-234 (LMIG…LAYL), 265-285 (LILV…FIGL), 303-323 (AINS…GLLV), 330-350 (IIWV…LAFT), 360-380 (LLGF…AFIV), 391-411 (FMQS…GMIL), and 417-437 (LLLE…VVCL).

Belongs to the major facilitator superfamily. In terms of assembly, homodimer. Interacts with lysosomal protein GLMP (via lumenal domain); the interaction starts while both proteins are still in the endoplasmic reticulum and is required for stabilization of MFSD1 in lysosomes but has no direct effect on its targeting to lysosomes or transporter activity. Post-translationally, not N-glycosylated. In terms of tissue distribution, in brain, expressed in the cortex, striatum hippocampus, hypothalamus, thalamus and brainstem (at protein level). Widely expressed with highest levels in kidney and spleen (at protein level).

It is found in the lysosome membrane. The enzyme catalyses L-alpha-aminoacyl-L-arginine(out) = L-alpha-aminoacyl-L-arginine(in). The catalysed reaction is L-arginyl-L-alpha-amino acid(out) = L-arginyl-L-alpha-amino acid(in). It catalyses the reaction L-arginyl-glycine(out) = L-arginyl-glycine(in). It carries out the reaction L-alpha-aminoacyl-L-lysine(out) = L-alpha-aminoacyl-L-lysine(in). The enzyme catalyses L-aspartyl-L-lysine(out) = L-aspartyl-L-lysine(in). The catalysed reaction is L-alanyl-L-lysine(out) = L-alanyl-L-lysine(in). It catalyses the reaction L-lysyl-L-alpha-amino acid(out) = L-lysyl-L-alpha-amino acid(in). It carries out the reaction L-lysyl-L-alanine(out) = L-lysyl-L-alanine(in). The enzyme catalyses L-lysyl-L-lysine(out) = L-lysyl-L-lysine(in). The catalysed reaction is L-lysyl-glycine(out) = L-lysyl-glycine(in). It catalyses the reaction L-alpha-aminoacyl-L-histidine(out) = L-alpha-aminoacyl-L-histidine(in). It carries out the reaction L-histidyl-L-alpha-amino acid(out) = L-histidyl-L-alpha-amino acid(in). The enzyme catalyses L-histidyl-glycine(out) = L-histidyl-glycine(in). In terms of biological role, lysosomal dipeptide uniporter that selectively exports lysine, arginine or histidine-containing dipeptides with a net positive charge from the lysosome lumen into the cytosol. Could play a role in a specific type of protein O-glycosylation indirectly regulating macrophages migration and tissue invasion. Also essential for liver homeostasis. In Mus musculus (Mouse), this protein is Lysosomal dipeptide transporter MFSD1.